A 298-amino-acid polypeptide reads, in one-letter code: MNSGKILIVSSTHGNEINPVWSVNQYSKQGNIIDKNIEYKFIIGNPLAYEKGCRYIDKDLNRSFNLIKNNHDTSIYEIRRANFLVEKFGVNGSEPCDIAIDLHTTTANMGTSIVMYGRREKDFCLAALLQHKFGLPIYLHEKDEKQTGFLVEAWPCGLVIEIGPVAQNFYDPKIINRFLIIISSLREEINKLKNKQKQLPKLVIVHVHQGSIDYPRGEDGNINALIHPKRMNQDWKPIKKGDPLFMDMEGCTKSYNGKNTLWPVFIGEVAYKEKNIAMSYTKKEVINLPTQICEDFFN.

The Zn(2+) site is built by H13 and E16. Substrate-binding positions include R54 and 61–62 (NR). H103 serves as a coordination point for Zn(2+). 2 residues coordinate substrate: E161 and Y271.

It belongs to the AspA/AstE family. Aspartoacylase subfamily. Zn(2+) serves as cofactor.

The enzyme catalyses an N-acyl-L-aspartate + H2O = a carboxylate + L-aspartate. The chain is Probable aspartoacylase from Prochlorococcus marinus (strain MIT 9515).